We begin with the raw amino-acid sequence, 263 residues long: Small ribosomal subunit protein eS4 (263 aa).

In terms of domain architecture, S4 RNA-binding spans 42-104 (LPLIVFLRNR…TGEHFRLVYD (63 aa)).

This sequence belongs to the eukaryotic ribosomal protein eS4 family.

The polypeptide is Small ribosomal subunit protein eS4 (RPS4Y1) (Gorilla gorilla gorilla (Western lowland gorilla)).